We begin with the raw amino-acid sequence, 124 residues long: Large ribosomal subunit protein eL22z (124 aa).

The protein belongs to the eukaryotic ribosomal protein eL22 family.

The sequence is that of Large ribosomal subunit protein eL22z (RPL22B) from Arabidopsis thaliana (Mouse-ear cress).